The primary structure comprises 570 residues: Urease subunit alpha (570 aa).

The Urease domain occupies 131 to 570 (GGFDSHIHFI…LPMAQRYFMY (440 aa)). Ni(2+) is bound by residues histidine 136, histidine 138, and lysine 219. Position 219 is an N6-carboxylysine (lysine 219). A substrate-binding site is contributed by histidine 221. Positions 248 and 274 each coordinate Ni(2+). Histidine 322 acts as the Proton donor in catalysis. Aspartate 362 contacts Ni(2+).

Belongs to the metallo-dependent hydrolases superfamily. Urease alpha subunit family. In terms of assembly, heterotrimer of UreA (gamma), UreB (beta) and UreC (alpha) subunits. Three heterotrimers associate to form the active enzyme. The cofactor is Ni cation. In terms of processing, carboxylation allows a single lysine to coordinate two nickel ions.

The protein localises to the cytoplasm. The catalysed reaction is urea + 2 H2O + H(+) = hydrogencarbonate + 2 NH4(+). The protein operates within nitrogen metabolism; urea degradation; CO(2) and NH(3) from urea (urease route): step 1/1. The polypeptide is Urease subunit alpha (Rhodopseudomonas palustris (strain HaA2)).